Here is a 313-residue protein sequence, read N- to C-terminus: WD repeat-containing protein 82-A (313 aa).

6 WD repeats span residues 19–58, 105–144, 146–184, 192–231, 236–276, and 280–313; these read ENSDKINCFDFSPTGETVISSSDDDSIVLYDCQEGKPKRT, GHSKRVVALSMSPVDDTFISASLDKTIRLWDLRSPNCQGL, HLQGKPVCSFDPEGLIFAAGVNSEMVKLYDLRSFDKGPF, DRTCEWTSLKFSQDGKLILMSTNGGFLRLVDAFKGAVMHT, NNSK…KVAV, and KHTGPITCLQFNPKFMTFASACSNMAFWLPTIDD.

It belongs to the WD repeat SWD2 family. As to quaternary structure, component of the SET1/COMPASS complex. Component of the PNUTS-PP1 phosphatase complex.

Its subcellular location is the nucleus. It is found in the chromosome. The protein resides in the cytoplasm. Regulatory component of the SET1/COMPASS complex implicated in the tethering of this complex to transcriptional start sites of active genes. Facilitates histone H3 'Lys-4' methylation (H3K4me) via recruitment of the SETD1A or SETD1B to the 'Ser-5' phosphorylated C-terminal domain (CTD) of RNA polymerase II large subunit (POLR2A). Component of the PNUTS-PP1 protein phosphatase complex, a protein phosphatase 1 (PP1) complex that promotes RNA polymerase II transcription pause-release, allowing transcription elongation. The sequence is that of WD repeat-containing protein 82-A (wdr82-a) from Xenopus laevis (African clawed frog).